Reading from the N-terminus, the 496-residue chain is Neuronal acetylcholine receptor subunit beta-4 (496 aa).

Positions 1-19 (MRSALPLVLFSLVALCGRG) are cleaved as a signal peptide. The Extracellular portion of the chain corresponds to 20–236 (DCRVANAEEK…IIKRKPLFYT (217 aa)). N-linked (GlcNAc...) asparagine glycans are attached at residues Asn-36, Asn-93, Asn-138, and Asn-166. Cys-153 and Cys-167 are disulfide-bonded. A helical membrane pass occupies residues 237–257 (INLIIPCVLITSLAILVFYLP). The Cytoplasmic portion of the chain corresponds to 258–265 (SDCGEKMT). Glu-262 is a Na(+) binding site. The chain crosses the membrane as a helical span at residues 266–286 (LCISVLLALTVFLLLISKIVP). Over 287 to 298 (PTSLNVPLIGKY) the chain is Extracellular. The helical transmembrane segment at 299-319 (LMFTMVLVTFSIVTSVCVLNV) threads the bilayer. Over 320-464 (HHRSPSTHTM…WKYVAMVVDR (145 aa)) the chain is Cytoplasmic. A helical membrane pass occupies residues 465–485 (LFLWVFVVVCVLGTVGLFLPP). Residues 486 to 496 (LFQTHTPSEEP) lie on the Extracellular side of the membrane.

Belongs to the ligand-gated ion channel (TC 1.A.9) family. Acetylcholine receptor (TC 1.A.9.1) subfamily. Beta-4/CHRNB4 sub-subfamily. Neuronal AChR is composed of two different types of subunits: alpha and beta. CHRNB4/Beta-4 subunit can be combined to CHRNA2/alpha-2, CHRNA3/alpha-3 or CHRNA4/alpha-4, CHRNA5/alpha-5 and CHRNB3/beta-3 to give rise to functional receptors. Forms stoichiometries such as (CHRNA3)2:(CHRNB4)3 or (CHRNA3:CHRNB4)2:CHRNB3. Interacts with RIC3; which is required for proper folding and assembly. Interacts with LYPD6.

It is found in the synaptic cell membrane. The protein resides in the cell membrane. It carries out the reaction Ca(2+)(in) = Ca(2+)(out). The enzyme catalyses K(+)(in) = K(+)(out). It catalyses the reaction Na(+)(in) = Na(+)(out). In terms of biological role, component of neuronal acetylcholine receptors (nAChRs) that function as pentameric, ligand-gated cation channels with high calcium permeability among other activities. nAChRs are excitatory neurotrasnmitter receptors formed by a collection of nAChR subunits known to mediate synaptic transmission in the nervous system and the neuromuscular junction. Each nAchR subunit confers differential attributes to channel properties, including activation, deactivation and desensitization kinetics, pH sensitivity, cation permeability, and binding to allosteric modulators. CHRNB4 forms heteropentameric neuronal acetylcholine receptors with CHRNA2, CHRNA3 and CHRNA4, as well as CHRNA5 and CHRNB3 as accesory subunits. CHRNA3:CHRNB4 being predominant in neurons of the autonomic ganglia, it is known as ganglionic nicotinic receptor. CHRNA3:CHRNB4 or CHRNA3:CHRNA5:CHRNB4 play also an important role in the habenulo-interpeduncular tract, modulating the mesolimbic dopamine system and affecting reward circuits and addiction. Hypothalamic CHRNA3:CHRNB4 nAChR activation by nicotine leads to activation of POMC neurons and a decrease in food intake. The polypeptide is Neuronal acetylcholine receptor subunit beta-4 (CHRNB4) (Bos taurus (Bovine)).